The sequence spans 347 residues: D-alanine--D-alanine ligase (347 aa).

Residues 134–332 (KLYAKDLGVK…LAQSLPKTPK (199 aa)) form the ATP-grasp domain. 161-216 (LIGFNFPFIIKPSNAGSSLGVSVVKEEKELIYALDGAFEYSKEILIEPFIQGVKEY) serves as a coordination point for ATP. Residues D288, E300, and N302 each coordinate Mg(2+).

Belongs to the D-alanine--D-alanine ligase family. Requires Mg(2+) as cofactor. Mn(2+) is required as a cofactor.

It localises to the cytoplasm. It catalyses the reaction 2 D-alanine + ATP = D-alanyl-D-alanine + ADP + phosphate + H(+). The protein operates within cell wall biogenesis; peptidoglycan biosynthesis. Its function is as follows. Cell wall formation. This chain is D-alanine--D-alanine ligase, found in Helicobacter pylori (strain Shi470).